We begin with the raw amino-acid sequence, 72 residues long: Translation initiation factor IF-1 (72 aa).

Residues 1–72 (MAKDDVIEVE…TRGRITYRYK (72 aa)) enclose the S1-like domain. Residue tyrosine 60 is modified to Phosphotyrosine.

The protein belongs to the IF-1 family. As to quaternary structure, component of the 30S ribosomal translation pre-initiation complex which assembles on the 30S ribosome in the order IF-2 and IF-3, IF-1 and N-formylmethionyl-tRNA(fMet); mRNA recruitment can occur at any time during PIC assembly.

Its subcellular location is the cytoplasm. One of the essential components for the initiation of protein synthesis. Stabilizes the binding of IF-2 and IF-3 on the 30S subunit to which N-formylmethionyl-tRNA(fMet) subsequently binds. Helps modulate mRNA selection, yielding the 30S pre-initiation complex (PIC). Upon addition of the 50S ribosomal subunit IF-1, IF-2 and IF-3 are released leaving the mature 70S translation initiation complex. This Oceanobacillus iheyensis (strain DSM 14371 / CIP 107618 / JCM 11309 / KCTC 3954 / HTE831) protein is Translation initiation factor IF-1.